We begin with the raw amino-acid sequence, 734 residues long: Photosystem I P700 chlorophyll a apoprotein A2 (734 aa).

A run of 8 helical transmembrane segments spans residues 46–69 (IFAS…FHVA), 135–158 (LYTG…LHLQ), 175–199 (LNHH…HVAI), 273–291 (IAHH…GHMY), 330–353 (IHFQ…QHMY), 369–395 (AALY…IFFI), 417–439 (AIIS…LYVH), and 517–535 (FLVH…LILV). Cys559 and Cys568 together coordinate [4Fe-4S] cluster. The next 2 helical transmembrane spans lie at 575–596 (AFYL…YWHW) and 643–665 (LSVW…MFLI). Chlorophyll a is bound by residues His654, Met662, and Tyr670. Residue Trp671 coordinates phylloquinone. The helical transmembrane segment at 707-727 (LVGLAHFSVGYIFTYAAFLIA) threads the bilayer.

This sequence belongs to the PsaA/PsaB family. In terms of assembly, the PsaA/B heterodimer binds the P700 chlorophyll special pair and subsequent electron acceptors. PSI consists of a core antenna complex that captures photons, and an electron transfer chain that converts photonic excitation into a charge separation. The eukaryotic PSI reaction center is composed of at least 11 subunits. The cofactor is P700 is a chlorophyll a/chlorophyll a' dimer, A0 is one or more chlorophyll a, A1 is one or both phylloquinones and FX is a shared 4Fe-4S iron-sulfur center..

It localises to the plastid. The protein localises to the chloroplast thylakoid membrane. It carries out the reaction reduced [plastocyanin] + hnu + oxidized [2Fe-2S]-[ferredoxin] = oxidized [plastocyanin] + reduced [2Fe-2S]-[ferredoxin]. Its function is as follows. PsaA and PsaB bind P700, the primary electron donor of photosystem I (PSI), as well as the electron acceptors A0, A1 and FX. PSI is a plastocyanin-ferredoxin oxidoreductase, converting photonic excitation into a charge separation, which transfers an electron from the donor P700 chlorophyll pair to the spectroscopically characterized acceptors A0, A1, FX, FA and FB in turn. Oxidized P700 is reduced on the lumenal side of the thylakoid membrane by plastocyanin. The protein is Photosystem I P700 chlorophyll a apoprotein A2 of Agrostis stolonifera (Creeping bentgrass).